Here is a 439-residue protein sequence, read N- to C-terminus: Glutamate--tRNA ligase 2 (439 aa).

The 'HIGH' region motif lies at 6 to 16 (PSPTGDMHIGN). Residues 232–236 (KMSKR) carry the 'KMSKS' region motif. K235 contacts ATP.

Belongs to the class-I aminoacyl-tRNA synthetase family. Glutamate--tRNA ligase type 1 subfamily. Monomer.

Its subcellular location is the cytoplasm. It carries out the reaction tRNA(Glu) + L-glutamate + ATP = L-glutamyl-tRNA(Glu) + AMP + diphosphate. Its function is as follows. Catalyzes the attachment of glutamate to tRNA(Glu) in a two-step reaction: glutamate is first activated by ATP to form Glu-AMP and then transferred to the acceptor end of tRNA(Glu). The chain is Glutamate--tRNA ligase 2 from Helicobacter pylori (strain P12).